Here is a 423-residue protein sequence, read N- to C-terminus: Hypoxia responsive morphology factor B (423 aa).

The short motif at 46–69 (KRSKTRRPKKEYKLQYENTKAHRV) is the Bipartite nuclear localization signal element. Residues 157–187 (TQNCWAYRAAYLNAVHTIFSEQICSAMEVSP) are RNA recognition motif (RRM)-like domain. Polar residues predominate over residues 243-257 (LSPQSGRGPEPSTQI). Positions 243 to 273 (LSPQSGRGPEPSTQIAEPGRHDSQSEQSTIS) are disordered.

Belongs to the hrmA family.

It localises to the nucleus. Its function is as follows. Probably modulates the generation of the hypoxia-typic morphotype (called H-MORPH) with altered biofilm architecture that leads to increased host inflammation, rapid disease progression, and mortality in a murine model of invasive aspergillosis. The sequence is that of Hypoxia responsive morphology factor B from Aspergillus fumigatus (strain CBS 144.89 / FGSC A1163 / CEA10) (Neosartorya fumigata).